Consider the following 216-residue polypeptide: MVSFSSLFVAACAAVTAFALPSELEKRAITTSQQGTSNGYFYSFWTNGGGSVSYNNGASGEYSVSWSNCGSFTSGKGWATGSSRNINFSGSFKPSGNAYLAVYGWTTSPLVEYYIMENYGDYNPGRSMTFKGTVTSDGSVYDIYTHQQVNQPSISGTATFEQYWSIRRTKRSSGTVTTANHFKAWASHGMYLGSHNYQIVSTEGYQSSGSSDITVS.

A signal peptide spans methionine 1–alanine 19. The GH11 domain maps to alanine 28–serine 216. Glutamate 112 (nucleophile) is an active-site residue. Catalysis depends on glutamate 203, which acts as the Proton donor.

Belongs to the glycosyl hydrolase 11 (cellulase G) family.

The protein resides in the secreted. It carries out the reaction Endohydrolysis of (1-&gt;4)-beta-D-xylosidic linkages in xylans.. The protein operates within glycan degradation; xylan degradation. Functionally, endo-1,4-beta-xylanase involved in the hydrolysis of xylan, a major structural heterogeneous polysaccharide found in plant biomass representing the second most abundant polysaccharide in the biosphere, after cellulose. Acts as a pathogen-associated molecular pattern (PAMP) that can trigger plant cell death. Triggers a series of immune responses in citrus fruit and enhanced the resistance of citrus and other fruit against fungal pathogens. The polypeptide is Ethylene-inducing xylanase (Penicillium digitatum (strain Pd1 / CECT 20795) (Green mold)).